A 404-amino-acid polypeptide reads, in one-letter code: Translation initiation factor eIF2B subunit gamma (404 aa).

Belongs to the eIF-2B gamma/epsilon subunits family. In terms of assembly, component of the translation initiation factor 2B (eIF2B) complex which is a heterodecamer of two sets of five different subunits: alpha, beta, gamma, delta and epsilon. Subunits alpha, beta and delta comprise a regulatory subcomplex and subunits epsilon and gamma comprise a catalytic subcomplex. Within the complex, the hexameric regulatory complex resides at the center, with the two heterodimeric catalytic subcomplexes bound on opposite sides.

Its subcellular location is the cytoplasm. It is found in the cytosol. Acts as a component of the translation initiation factor 2B (eIF2B) complex, which catalyzes the exchange of GDP for GTP on the eukaryotic initiation factor 2 (eIF2) complex gamma subunit. Its guanine nucleotide exchange factor activity is repressed when bound to eIF2 complex phosphorylated on the alpha subunit, thereby limiting the amount of methionyl-initiator methionine tRNA available to the ribosome and consequently global translation is repressed. The sequence is that of Translation initiation factor eIF2B subunit gamma from Caenorhabditis elegans.